The primary structure comprises 400 residues: Acetate kinase (400 aa).

Mg(2+) is bound at residue Asn-8. Residue Lys-15 coordinates ATP. Arg-89 is a substrate binding site. Asp-146 acts as the Proton donor/acceptor in catalysis. Residues 206-210 (HVGNG), 283-285 (DMR), and 331-335 (GMGEN) each bind ATP. Glu-383 is a binding site for Mg(2+).

Belongs to the acetokinase family. Homodimer. The cofactor is Mg(2+). Mn(2+) serves as cofactor.

It is found in the cytoplasm. The catalysed reaction is acetate + ATP = acetyl phosphate + ADP. The protein operates within metabolic intermediate biosynthesis; acetyl-CoA biosynthesis; acetyl-CoA from acetate: step 1/2. Functionally, catalyzes the formation of acetyl phosphate from acetate and ATP. Can also catalyze the reverse reaction. The polypeptide is Acetate kinase (Streptococcus equi subsp. zooepidemicus (strain MGCS10565)).